A 102-amino-acid polypeptide reads, in one-letter code: Small ribosomal subunit protein uS10 (102 aa).

It belongs to the universal ribosomal protein uS10 family. Part of the 30S ribosomal subunit.

Its function is as follows. Involved in the binding of tRNA to the ribosomes. The protein is Small ribosomal subunit protein uS10 of Pediococcus pentosaceus (strain ATCC 25745 / CCUG 21536 / LMG 10740 / 183-1w).